The sequence spans 241 residues: Diacetyl reductase [(S)-acetoin forming] (241 aa).

6–30 (LVTGAGQGIGKAIALRLVKDGFAVA) is an NAD(+) binding site. Substrate is bound at residue Ser139. The Proton acceptor role is filled by Tyr152. The active site involves Lys156.

Belongs to the short-chain dehydrogenases/reductases (SDR) family. Homotetramer.

The enzyme catalyses (S)-acetoin + NAD(+) = diacetyl + NADH + H(+). In terms of biological role, catalyzes the irreversible reduction of 2,3-butanediol to (S)-acetoin in the presence of NADH. This chain is Diacetyl reductase [(S)-acetoin forming] (budC), found in Raoultella terrigena (Klebsiella terrigena).